The chain runs to 76 residues: Esculentin-2MT2 (76 aa).

The first 22 residues, 1–22, serve as a signal peptide directing secretion; that stretch reads MFTLKKSMLLLFFLGTISLSLC. A propeptide spans 23-37 (removed in mature form); the sequence is EEERSADEDDGEKEV. The cysteines at positions 70 and 76 are disulfide-linked.

This sequence belongs to the frog skin active peptide (FSAP) family. Esculentin subfamily. Expressed by the skin glands.

The protein localises to the secreted. Its function is as follows. Antimicrobial peptide. Active against a variety of Gram-negative and Gram-positive bacterial strains. Active against fungi. Shows strong hemolytic activity against human erythrocytes. The chain is Esculentin-2MT2 from Amolops mantzorum (Sichuan torrent frog).